The primary structure comprises 331 residues: MARMYYDEDGNLDLLANKTVAIIGYGSQGHAHALNLKDSGIDVIVGLYPGSKSAKKAEEAGLTVHSVADAAAKADWIMILLPDEVQKSVYKQEIEPHLKEGKVLSFAHGFNIHFGQIVPPPTVDVVMVAPKGPGHLVRRTYTQGEGVPCLFAVFQDASGQARDRAMAYAKGIGGTRAGILETSFREETETDLFGEQVVLCGGLSALIKAGFQTLVDAGYQPELAYFECLHEVKLIVDLIVEGGLANMRDSISNTAEYGDYTRGPRIVTDETRAEMRKILQEIQSGQFAREFVLENQSGKPGFTAMRRQEAEHPIEEVGKDLRAMFSWLKKA.

The KARI N-terminal Rossmann domain occupies A2–T182. NADP(+) contacts are provided by residues Y25–Q28, S51, S53, and D83–Q86. H108 is a catalytic residue. NADP(+) is bound at residue G134. The region spanning S183 to L328 is the KARI C-terminal knotted domain. Mg(2+)-binding residues include D191, E195, E227, and E231. Residue S252 participates in substrate binding.

The protein belongs to the ketol-acid reductoisomerase family. The cofactor is Mg(2+).

The catalysed reaction is (2R)-2,3-dihydroxy-3-methylbutanoate + NADP(+) = (2S)-2-acetolactate + NADPH + H(+). It catalyses the reaction (2R,3R)-2,3-dihydroxy-3-methylpentanoate + NADP(+) = (S)-2-ethyl-2-hydroxy-3-oxobutanoate + NADPH + H(+). The protein operates within amino-acid biosynthesis; L-isoleucine biosynthesis; L-isoleucine from 2-oxobutanoate: step 2/4. It participates in amino-acid biosynthesis; L-valine biosynthesis; L-valine from pyruvate: step 2/4. Involved in the biosynthesis of branched-chain amino acids (BCAA). Catalyzes an alkyl-migration followed by a ketol-acid reduction of (S)-2-acetolactate (S2AL) to yield (R)-2,3-dihydroxy-isovalerate. In the isomerase reaction, S2AL is rearranged via a Mg-dependent methyl migration to produce 3-hydroxy-3-methyl-2-ketobutyrate (HMKB). In the reductase reaction, this 2-ketoacid undergoes a metal-dependent reduction by NADPH to yield (R)-2,3-dihydroxy-isovalerate. This chain is Ketol-acid reductoisomerase (NADP(+)), found in Gloeothece citriformis (strain PCC 7424) (Cyanothece sp. (strain PCC 7424)).